The primary structure comprises 326 residues: Transmembrane protein 255B (326 aa).

4 helical membrane-spanning segments follow: residues 26–46 (LWFVGSLLLVSVLIVTVGLAA), 55–75 (VGGYYPGIILGFGSFLGIIGI), 85–105 (LVAAIVFISFGVVAAFCCAIV), and 200–220 (AVLNVLGLFLGIITAAVLGAF). The segment at 284-326 (LASSEDLQPPSPSSSGSGLPGQAPPCYAPTYFPPGEKPPPYAP) is disordered. Pro residues predominate over residues 305 to 326 (QAPPCYAPTYFPPGEKPPPYAP).

This sequence belongs to the TMEM255 family.

It is found in the membrane. This Homo sapiens (Human) protein is Transmembrane protein 255B (TMEM255B).